The sequence spans 1407 residues: Trichohyalin (1407 aa).

The tract at residues 1-91 is S-100-like; that stretch reads MSPLLKSIID…AQAAYYALGQ (91 aa). 2 EF-hand domains span residues 23 to 48 and 49 to 84; these read CDGA…LQRP and HDPE…LAQA. Ca(2+) contacts are provided by aspartate 32, aspartate 62, aspartate 64, aspartate 66, and glutamate 73. 7 disordered regions span residues 148-172, 218-237, 362-471, 486-587, 1014-1033, 1062-1082, and 1313-1407; these read EEEE…DKEQ, LREE…RALQ, REQA…EEEQ, EQLQ…ERER, REEE…EEER, KEEK…EEQQ, and EQFA…QYRP. Basic and acidic residues-rich tracts occupy residues 362–381, 396–424, 447–471, and 554–587; these read REQA…RQLE, RRQE…EQAR, SLRE…EEEQ, and QREK…ERER. Residues 1313 to 1376 show a composition bias toward basic and acidic residues; that stretch reads EQFAREEKSR…FREDQSRRQV (64 aa).

The protein belongs to the S100-fused protein family. Homodimer. Post-translationally, substrate of transglutaminase. Some 200 arginines are probably converted to citrullines by peptidylarginine deimidase. As to expression, found in the hard keratinizing tissues such as the inner root sheath (IRS) of hair follicles and medulla, and in the filiform papillae of dorsal tongue epithelium.

Its function is as follows. Intermediate filament-associated protein that associates in regular arrays with keratin intermediate filaments (KIF) of the inner root sheath cells of the hair follicle and the granular layer of the epidermis. It later becomes cross-linked to KIF by isodipeptide bonds. It may serve as scaffold protein, together with involucrin, in the organization of the cell envelope or even anchor the cell envelope to the KIF network. It may be involved in its own calcium-dependent postsynthetic processing during terminal differentiation. This Oryctolagus cuniculus (Rabbit) protein is Trichohyalin (TCHH).